A 73-amino-acid polypeptide reads, in one-letter code: Translational regulator CsrA (73 aa).

This sequence belongs to the CsrA/RsmA family. Homodimer; the beta-strands of each monomer intercalate to form a hydrophobic core, while the alpha-helices form wings that extend away from the core.

The protein resides in the cytoplasm. In terms of biological role, a translational regulator that binds mRNA to regulate translation initiation and/or mRNA stability. Usually binds in the 5'-UTR at or near the Shine-Dalgarno sequence preventing ribosome-binding, thus repressing translation. Its main target seems to be the major flagellin gene, while its function is anatagonized by FliW. The polypeptide is Translational regulator CsrA (Clostridium kluyveri (strain NBRC 12016)).